The chain runs to 229 residues: Peptidase E (229 aa).

Catalysis depends on charge relay system residues Ser-120, Asp-135, and His-157.

The protein belongs to the peptidase S51 family.

The protein localises to the cytoplasm. The catalysed reaction is Dipeptidase E catalyzes the hydrolysis of dipeptides Asp-|-Xaa. It does not act on peptides with N-terminal Glu, Asn or Gln, nor does it cleave isoaspartyl peptides.. Functionally, hydrolyzes dipeptides containing N-terminal aspartate residues. May play a role in allowing the cell to use peptide aspartate to spare carbon otherwise required for the synthesis of the aspartate family of amino acids. The polypeptide is Peptidase E (Salmonella paratyphi A (strain AKU_12601)).